The following is a 228-amino-acid chain: PKHD-type hydroxylase Reut_A2877 (228 aa).

Residues 80–180 form the Fe2OG dioxygenase domain; sequence IVYPPMFNRY…RVASFFWIQS (101 aa). His-98, Asp-100, and His-161 together coordinate Fe cation. Arg-171 provides a ligand contact to 2-oxoglutarate.

Fe(2+) is required as a cofactor. The cofactor is L-ascorbate.

The protein is PKHD-type hydroxylase Reut_A2877 of Cupriavidus pinatubonensis (strain JMP 134 / LMG 1197) (Cupriavidus necator (strain JMP 134)).